Consider the following 221-residue polypeptide: Ras-related protein RabS (221 aa).

16 to 23 (GDNQCGKS) contacts GTP. The short motif at 38–47 (GIQLWHGIEI) is the Effector region element. GTP contacts are provided by residues 71–75 (DGNGG) and 137–140 (NKCD). Residue C218 is modified to Cysteine methyl ester. C218 carries S-geranylgeranyl cysteine lipidation. Residues 219 to 221 (IIN) constitute a propeptide, removed in mature form.

This sequence belongs to the small GTPase superfamily. Rab family.

It is found in the cell membrane. This chain is Ras-related protein RabS (rabS), found in Dictyostelium discoideum (Social amoeba).